The primary structure comprises 246 residues: UDP-N-acetyl-D-mannosaminuronic acid transferase (246 aa).

Belongs to the glycosyltransferase 26 family.

The catalysed reaction is UDP-N-acetyl-alpha-D-mannosaminouronate + N-acetyl-alpha-D-glucosaminyl-di-trans,octa-cis-undecaprenyl diphosphate = beta-D-ManNAcA-(1-&gt;4)-alpha-D-GlcNAc-di-trans,octa-cis-undecaprenyl diphosphate + UDP + H(+). The protein operates within bacterial outer membrane biogenesis; enterobacterial common antigen biosynthesis. Catalyzes the synthesis of Und-PP-GlcNAc-ManNAcA (Lipid II), the second lipid-linked intermediate involved in enterobacterial common antigen (ECA) synthesis. The polypeptide is UDP-N-acetyl-D-mannosaminuronic acid transferase (Yersinia pestis bv. Antiqua (strain Antiqua)).